The chain runs to 237 residues: Protein GrpE (237 aa).

2 disordered regions span residues Glu-27–Thr-51 and Ala-202–Ser-237. Low complexity-rich tracts occupy residues Ala-33–Ser-45 and Ser-204–Ser-213. Residues Thr-227–Ser-237 are compositionally biased toward polar residues.

The protein belongs to the GrpE family. As to quaternary structure, homodimer.

Its subcellular location is the cytoplasm. Its function is as follows. Participates actively in the response to hyperosmotic and heat shock by preventing the aggregation of stress-denatured proteins, in association with DnaK and GrpE. It is the nucleotide exchange factor for DnaK and may function as a thermosensor. Unfolded proteins bind initially to DnaJ; upon interaction with the DnaJ-bound protein, DnaK hydrolyzes its bound ATP, resulting in the formation of a stable complex. GrpE releases ADP from DnaK; ATP binding to DnaK triggers the release of the substrate protein, thus completing the reaction cycle. Several rounds of ATP-dependent interactions between DnaJ, DnaK and GrpE are required for fully efficient folding. In Synechococcus sp. (strain JA-3-3Ab) (Cyanobacteria bacterium Yellowstone A-Prime), this protein is Protein GrpE.